The primary structure comprises 45 residues: Large ribosomal subunit protein bL34 (45 aa).

Positions 1–45 are disordered; that stretch reads MTKRTFGGTSRKRKRVSGFRVRMRSHTGRRVIRTRRKRGRSRLAA. Residues 10–45 are compositionally biased toward basic residues; sequence SRKRKRVSGFRVRMRSHTGRRVIRTRRKRGRSRLAA.

The protein belongs to the bacterial ribosomal protein bL34 family.

This Synechococcus sp. (strain CC9311) protein is Large ribosomal subunit protein bL34.